We begin with the raw amino-acid sequence, 150 residues long: 3-dehydroquinate dehydratase (150 aa).

Tyrosine 26 (proton acceptor) is an active-site residue. Substrate-binding residues include asparagine 77, histidine 83, and aspartate 90. Histidine 103 acts as the Proton donor in catalysis. Substrate-binding positions include 104–105 and arginine 114; that span reads LS.

It belongs to the type-II 3-dehydroquinase family. Homododecamer.

It catalyses the reaction 3-dehydroquinate = 3-dehydroshikimate + H2O. It participates in metabolic intermediate biosynthesis; chorismate biosynthesis; chorismate from D-erythrose 4-phosphate and phosphoenolpyruvate: step 3/7. Catalyzes a trans-dehydration via an enolate intermediate. The protein is 3-dehydroquinate dehydratase of Enterobacter sp. (strain 638).